We begin with the raw amino-acid sequence, 124 residues long: Large ribosomal subunit protein bL12 (124 aa).

Belongs to the bacterial ribosomal protein bL12 family. Homodimer. Part of the ribosomal stalk of the 50S ribosomal subunit. Forms a multimeric L10(L12)X complex, where L10 forms an elongated spine to which 2 to 4 L12 dimers bind in a sequential fashion. Binds GTP-bound translation factors.

In terms of biological role, forms part of the ribosomal stalk which helps the ribosome interact with GTP-bound translation factors. Is thus essential for accurate translation. The sequence is that of Large ribosomal subunit protein bL12 from Cereibacter sphaeroides (strain ATCC 17025 / ATH 2.4.3) (Rhodobacter sphaeroides).